Reading from the N-terminus, the 433-residue chain is Glutamate-1-semialdehyde 2,1-aminomutase (433 aa).

An N6-(pyridoxal phosphate)lysine modification is found at lysine 273.

Belongs to the class-III pyridoxal-phosphate-dependent aminotransferase family. HemL subfamily. Homodimer. Pyridoxal 5'-phosphate serves as cofactor.

The protein localises to the cytoplasm. The enzyme catalyses (S)-4-amino-5-oxopentanoate = 5-aminolevulinate. It participates in porphyrin-containing compound metabolism; protoporphyrin-IX biosynthesis; 5-aminolevulinate from L-glutamyl-tRNA(Glu): step 2/2. Its pathway is porphyrin-containing compound metabolism; chlorophyll biosynthesis. This chain is Glutamate-1-semialdehyde 2,1-aminomutase, found in Gloeothece citriformis (strain PCC 7424) (Cyanothece sp. (strain PCC 7424)).